The following is a 175-amino-acid chain: uncharacterized protein (175 aa).

The protein belongs to the asfivirus B175L family.

This is an uncharacterized protein from Ornithodoros (relapsing fever ticks).